The sequence spans 293 residues: MSASPRLGFVQCISPAGLHRMAYHEWGDPANPRVLVCAHGLTRTGRDFDTVASALCGDYRVVCPDVAGRGRSEWLADANGYVVPQYVSDMVTLIARLNVEKVDWFGTSMGGLIGMGLAGLPKSPVRKLLLNDVGPKLAPSAVERIGAYLGLPVRFKTFEEGLAYLQTISASFGRHTPEQWRELNAAILKPVQGTDGLEWGLHYDPQLAVPFRKSTPEAIAAGEAALWRSFEAIEGPVLVVRGAQSDLLLRETVAEMVARGKHVSSVEVPDVGHAPTFVDPAQIAIAPQFFTGA.

It belongs to the AB hydrolase superfamily.

It localises to the cytoplasm. The catalysed reaction is (3R)-hydroxybutanoate pentamer + H2O = (3R)-hydroxybutanoate tetramer + (R)-3-hydroxybutanoate + H(+). It catalyses the reaction (3R)-hydroxybutanoate tetramer + H2O = (3R)-hydroxybutanoate trimer + (R)-3-hydroxybutanoate + H(+). It carries out the reaction (3R)-hydroxybutanoate trimer + H2O = (3R)-hydroxybutanoate dimer + (R)-3-hydroxybutanoate + H(+). The enzyme catalyses (3R)-hydroxybutanoate dimer + H2O = 2 (R)-3-hydroxybutanoate + H(+). The catalysed reaction is [(3R)-hydroxybutanoate](n) + H2O = [(3R)-hydroxybutanoate](n-1) + (R)-3-hydroxybutanoate + H(+). Functionally, catalyzes the degradation of various 3-hydroxybutyrate (3HB) oligomers at a high specific activity and artificial amorphous poly(3-hydroxybutyrate) (PHB) at a lower specific activity. Hydrolyzes the 3HB pentamer most efficiently than the tetramer, trimer and dimer. Does not hydrolyze native PHB granules and semicrystalline PHB. Participates in the mobilization of PHB along with other hydrolases. The sequence is that of 3-hydroxybutyrate-oligomer hydrolase from Cupriavidus necator (strain ATCC 17699 / DSM 428 / KCTC 22496 / NCIMB 10442 / H16 / Stanier 337) (Ralstonia eutropha).